A 1023-amino-acid polypeptide reads, in one-letter code: Vacuolar membrane protease (1023 aa).

Over 1–80 the chain is Cytoplasmic; that stretch reads MRAAGCGGTG…FFRSVFGYRK (80 aa). A compositionally biased stretch (polar residues) spans 17–48; sequence KLSRSISQHQPKSMPQASVNSEQNPSVPNSPS. The interval 17–59 is disordered; it reads KLSRSISQHQPKSMPQASVNSEQNPSVPNSPSAHKPARSQSAQ. The helical transmembrane segment at 81-101 threads the bilayer; sequence TSLTFLVALVFAATLLLSWAD. Residues 102–425 lie on the Vacuolar side of the membrane; the sequence is SSLDFSVDMP…VVFSVSQVVS (324 aa). 2 N-linked (GlcNAc...) asparagine glycosylation sites follow: Asn170 and Asn200. His214 and Asp226 together coordinate Zn(2+). Glu259 acts as the Proton acceptor in catalysis. 3 residues coordinate Zn(2+): Glu260, Glu285, and His357. A helical membrane pass occupies residues 426–446; that stretch reads ANIALLVVVPVASLLLLFIIF. Residues 447–461 are Cytoplasmic-facing; sequence RCNKGWGFNFVNAIK. Residues 462 to 482 traverse the membrane as a helical segment; sequence YPLSLVASVLVLTFVSQVIIV. At 483–491 the chain is on the vacuolar side; that stretch reads PSNPFLVNS. An N-linked (GlcNAc...) asparagine glycan is attached at Asn490. A helical membrane pass occupies residues 492–512; sequence SIGLLVATLFSLFLLLNYIVL. Over 513-529 the chain is Cytoplasmic; that stretch reads NGLNLVFKSFKGHQHDE. The chain crosses the membrane as a helical span at residues 530 to 550; it reads KLIVMCESSFLTWILLLWSTV. Residues 551–564 are Vacuolar-facing; sequence KLSHNKFGDDHTGE. A helical membrane pass occupies residues 565–585; the sequence is LFIPILFSLQAVACFLGFLGW. Residues 586-643 lie on the Cytoplasmic side of the membrane; the sequence is CFKPSKKVKVSREEHQPLLSSNGSNYGTQDDDDSLAPSSSLSLQSGFSENCEVHETKS. A compositionally biased stretch (polar residues) spans 604-613; that stretch reads LSSNGSNYGT. The tract at residues 604–626 is disordered; the sequence is LSSNGSNYGTQDDDDSLAPSSSL. Residues 644 to 664 traverse the membrane as a helical segment; the sequence is FSYDWLVQFLVIVPISSLIIF. Residues 665–687 are Vacuolar-facing; the sequence is NSGSLILNGLNKSIQESLSAQNL. Asn675 carries an N-linked (GlcNAc...) asparagine glycan. A helical membrane pass occupies residues 688 to 708; that stretch reads IYKFIQIFVIVWSIPFLPFIF. Over 709–712 the chain is Cytoplasmic; that stretch reads KLNR. A helical membrane pass occupies residues 713–733; it reads IIVLALSLVLLYGFFAVNITD. Over 734-1023 the chain is Vacuolar; sequence AFNDANPLKL…MVSVTKYIEV (290 aa). 3 N-linked (GlcNAc...) asparagine glycosylation sites follow: Asn815, Asn858, and Asn892.

The protein belongs to the peptidase M28 family. Zn(2+) serves as cofactor.

It is found in the vacuole membrane. May be involved in vacuolar sorting and osmoregulation. This chain is Vacuolar membrane protease, found in Clavispora lusitaniae (strain ATCC 42720) (Yeast).